A 348-amino-acid chain; its full sequence is Nicotinate-nucleotide--dimethylbenzimidazole phosphoribosyltransferase (348 aa).

Glu-316 (proton acceptor) is an active-site residue.

This sequence belongs to the CobT family.

The catalysed reaction is 5,6-dimethylbenzimidazole + nicotinate beta-D-ribonucleotide = alpha-ribazole 5'-phosphate + nicotinate + H(+). It participates in nucleoside biosynthesis; alpha-ribazole biosynthesis; alpha-ribazole from 5,6-dimethylbenzimidazole: step 1/2. Functionally, catalyzes the synthesis of alpha-ribazole-5'-phosphate from nicotinate mononucleotide (NAMN) and 5,6-dimethylbenzimidazole (DMB). The sequence is that of Nicotinate-nucleotide--dimethylbenzimidazole phosphoribosyltransferase from Xanthomonas euvesicatoria pv. vesicatoria (strain 85-10) (Xanthomonas campestris pv. vesicatoria).